The primary structure comprises 344 residues: Dihydroorotate dehydrogenase (quinone) (344 aa).

Residues 65–69 and Thr-89 contribute to the FMN site; that span reads AGLDK. Lys-69 contributes to the substrate binding site. Residue 114-118 coordinates substrate; the sequence is NRMGF. Asn-145 and Asn-178 together coordinate FMN. Asn-178 contributes to the substrate binding site. Ser-181 acts as the Nucleophile in catalysis. Asn-183 contributes to the substrate binding site. The FMN site is built by Lys-223 and Thr-251. 252–253 serves as a coordination point for substrate; that stretch reads NT. Residues Gly-274, Gly-303, and 324 to 325 each bind FMN; that span reads YT.

This sequence belongs to the dihydroorotate dehydrogenase family. Type 2 subfamily. Monomer. Requires FMN as cofactor.

It localises to the cell membrane. The catalysed reaction is (S)-dihydroorotate + a quinone = orotate + a quinol. It functions in the pathway pyrimidine metabolism; UMP biosynthesis via de novo pathway; orotate from (S)-dihydroorotate (quinone route): step 1/1. In terms of biological role, catalyzes the conversion of dihydroorotate to orotate with quinone as electron acceptor. The chain is Dihydroorotate dehydrogenase (quinone) from Ralstonia nicotianae (strain ATCC BAA-1114 / GMI1000) (Ralstonia solanacearum).